A 244-amino-acid chain; its full sequence is 3-deoxy-manno-octulosonate cytidylyltransferase (244 aa).

Belongs to the KdsB family.

The protein resides in the cytoplasm. It carries out the reaction 3-deoxy-alpha-D-manno-oct-2-ulosonate + CTP = CMP-3-deoxy-beta-D-manno-octulosonate + diphosphate. Its pathway is nucleotide-sugar biosynthesis; CMP-3-deoxy-D-manno-octulosonate biosynthesis; CMP-3-deoxy-D-manno-octulosonate from 3-deoxy-D-manno-octulosonate and CTP: step 1/1. It functions in the pathway bacterial outer membrane biogenesis; lipopolysaccharide biosynthesis. Its function is as follows. Activates KDO (a required 8-carbon sugar) for incorporation into bacterial lipopolysaccharide in Gram-negative bacteria. The protein is 3-deoxy-manno-octulosonate cytidylyltransferase of Synechococcus elongatus (strain ATCC 33912 / PCC 7942 / FACHB-805) (Anacystis nidulans R2).